Here is a 345-residue protein sequence, read N- to C-terminus: UDP-3-O-acylglucosamine N-acyltransferase (345 aa).

H237 functions as the Proton acceptor in the catalytic mechanism.

The protein belongs to the transferase hexapeptide repeat family. LpxD subfamily. Homotrimer.

The catalysed reaction is a UDP-3-O-[(3R)-3-hydroxyacyl]-alpha-D-glucosamine + a (3R)-hydroxyacyl-[ACP] = a UDP-2-N,3-O-bis[(3R)-3-hydroxyacyl]-alpha-D-glucosamine + holo-[ACP] + H(+). The protein operates within bacterial outer membrane biogenesis; LPS lipid A biosynthesis. Its function is as follows. Catalyzes the N-acylation of UDP-3-O-acylglucosamine using 3-hydroxyacyl-ACP as the acyl donor. Is involved in the biosynthesis of lipid A, a phosphorylated glycolipid that anchors the lipopolysaccharide to the outer membrane of the cell. The chain is UDP-3-O-acylglucosamine N-acyltransferase from Geobacter sp. (strain M21).